We begin with the raw amino-acid sequence, 132 residues long: Agouti-signaling protein (132 aa).

A signal peptide spans 1-22 (MDVTRLLLATLLVFLCFFTAYS). N-linked (GlcNAc...) asparagine glycosylation occurs at Asn39. Residues 61–87 (QISRKEAEKKRSSKKEASMKKVARPRT) form a disordered region. Basic and acidic residues predominate over residues 63–79 (SRKEAEKKRSSKKEASM). Disulfide bonds link Cys93-Cys108, Cys100-Cys114, Cys107-Cys125, Cys111-Cys132, and Cys116-Cys123. An Agouti domain is found at 93–132 (CVATRDSCKPPAPACCDPCAFCQCRFFRSACSCRVLSLNC).

The protein resides in the secreted. In terms of biological role, involved in the regulation of melanogenesis. The binding of ASP to MC1R precludes alpha-MSH initiated signaling and thus blocks production of cAMP, leading to a down-regulation of eumelanogenesis (brown/black pigment) and thus increasing synthesis of pheomelanin (yellow/red pigment). This chain is Agouti-signaling protein (ASIP), found in Macaca hecki (Heck's macaque).